The chain runs to 571 residues: MRTSQYLFSTLKETPNDAQVVSHQLMLRAGMIRPMASGLYNWLPTGIKVLKKVENIIREEMNKGGAIEVLMPVVQPAELWQESGRWNDYGAELLRFVDRGSRDFVLGPTHEEVITDLVRREVSSYKQLPLNLYQIQTKFRDEVRPRFGVMRSREFVMKDAYSFHVDKASLQETYDVMYQVYSNIFTRLGLDFRAVQADTGSIGGSASHEFQVLASSGEDDVVFSTESDFAANIELAEAVAVGERQAPTAEMQLVDTPNAKTINELVEQFNLPIEKTVKTLIVKGATEEQSLVALVLRGDHELNEIKAQKHPLVADPLEFADEAEIKAKIGAGVGSLGVINLNVPAIIDRSVAVMSDFGCGANIDGRHYFNVNWERDVAMPEVADLRNVVEGDPSPDGKGVLQIKRGIEVGHIFQLGTKYSEAMKATVQGDDGKPLVMTMGCYGIGVTRVVAAAIEQHHDERGIIWPSDEIAPFTVAIVPMNMHKSESVQQFSEELYRTLKAQGVDVIFDDRKERPGVMFADMELIGVPHMVVIGEKNLANGEIEYKNRRTGEKQMIAKDQLLAFLKENVKA.

This sequence belongs to the class-II aminoacyl-tRNA synthetase family. ProS type 1 subfamily. Homodimer.

It localises to the cytoplasm. The enzyme catalyses tRNA(Pro) + L-proline + ATP = L-prolyl-tRNA(Pro) + AMP + diphosphate. In terms of biological role, catalyzes the attachment of proline to tRNA(Pro) in a two-step reaction: proline is first activated by ATP to form Pro-AMP and then transferred to the acceptor end of tRNA(Pro). As ProRS can inadvertently accommodate and process non-cognate amino acids such as alanine and cysteine, to avoid such errors it has two additional distinct editing activities against alanine. One activity is designated as 'pretransfer' editing and involves the tRNA(Pro)-independent hydrolysis of activated Ala-AMP. The other activity is designated 'posttransfer' editing and involves deacylation of mischarged Ala-tRNA(Pro). The misacylated Cys-tRNA(Pro) is not edited by ProRS. The chain is Proline--tRNA ligase from Actinobacillus pleuropneumoniae serotype 7 (strain AP76).